Reading from the N-terminus, the 377-residue chain is Chaperone protein DnaJ (377 aa).

Positions 5 to 70 (DYYEILGVSR…QKRAAYDQYG (66 aa)) constitute a J domain. A CR-type zinc finger spans residues 132-210 (GVTKEIRIPT…CHGHGRIEKS (79 aa)). Zn(2+)-binding residues include Cys-145, Cys-148, Cys-162, Cys-165, Cys-184, Cys-187, Cys-198, and Cys-201. 4 CXXCXGXG motif repeats span residues 145–152 (CDVCHGSG), 162–169 (CPTCHGAG), 184–191 (CPHCHGRG), and 198–205 (CNKCHGHG).

The protein belongs to the DnaJ family. As to quaternary structure, homodimer. The cofactor is Zn(2+).

Its subcellular location is the cytoplasm. Participates actively in the response to hyperosmotic and heat shock by preventing the aggregation of stress-denatured proteins and by disaggregating proteins, also in an autonomous, DnaK-independent fashion. Unfolded proteins bind initially to DnaJ; upon interaction with the DnaJ-bound protein, DnaK hydrolyzes its bound ATP, resulting in the formation of a stable complex. GrpE releases ADP from DnaK; ATP binding to DnaK triggers the release of the substrate protein, thus completing the reaction cycle. Several rounds of ATP-dependent interactions between DnaJ, DnaK and GrpE are required for fully efficient folding. Also involved, together with DnaK and GrpE, in the DNA replication of plasmids through activation of initiation proteins. The sequence is that of Chaperone protein DnaJ from Edwardsiella ictaluri (strain 93-146).